A 350-amino-acid chain; its full sequence is Ion-translocating oxidoreductase complex subunit D (350 aa).

The next 4 helical transmembrane spans lie at 20–40 (IMLL…WFFG), 42–62 (GTVL…AAIL), 89–109 (IPPL…VVIA), and 123–143 (PAMI…TSWL). FMN phosphoryl threonine is present on Thr-187. Transmembrane regions (helical) follow at residues 214-234 (VLAG…GLFL), 242-262 (WHIP…GWLF), 267-287 (LASP…FFIL), 301-321 (LIFG…GGYP), and 322-342 (DGVA…DYYT).

The protein belongs to the NqrB/RnfD family. As to quaternary structure, the complex is composed of six subunits: RnfA, RnfB, RnfC, RnfD, RnfE and RnfG. FMN is required as a cofactor.

Its subcellular location is the cell inner membrane. Part of a membrane-bound complex that couples electron transfer with translocation of ions across the membrane. The sequence is that of Ion-translocating oxidoreductase complex subunit D from Klebsiella pneumoniae (strain 342).